We begin with the raw amino-acid sequence, 823 residues long: Protein ROOT HAIR DEFECTIVE 3 homolog 2 (823 aa).

Residues 1 to 688 lie on the Cytoplasmic side of the membrane; the sequence is MEVPISGGGG…EAHRRSNNWL (688 aa). The GB1/RHD3-type G domain maps to 45-260; it reads GLSYAVVSIV…IAPGGLAADR (216 aa). Residue 55 to 62 coordinates GTP; the sequence is GPQGSGKS. Residues 226 to 246 adopt a coiled-coil conformation; the sequence is LSSYEEKENLFKEQVGQLRQR. A helical membrane pass occupies residues 689 to 709; that stretch reads PPAWTVLLLAILGYNEFIFLL. The Lumenal segment spans residues 710 to 712; it reads RNP. The helical transmembrane segment at 713 to 733 threads the bilayer; sequence LYLLGLFVAFVVSYAAWLQYD. Residues 734-823 lie on the Cytoplasmic side of the membrane; the sequence is ITAYFRHGTL…SVGSNSDDES (90 aa). The interval 770–823 is disordered; it reads NQKSSSHPPRHRPPLHPQSFRNQAQQQSQAQVQYQAPSSLSSSSSVGSNSDDES. Residues 786 to 823 show a composition bias toward low complexity; that stretch reads PQSFRNQAQQQSQAQVQYQAPSSLSSSSSVGSNSDDES.

The protein belongs to the TRAFAC class dynamin-like GTPase superfamily. GB1/RHD3 GTPase family. RHD3 subfamily.

The protein resides in the endoplasmic reticulum membrane. In terms of biological role, probable GTP-binding protein that may be involved in cell development. This chain is Protein ROOT HAIR DEFECTIVE 3 homolog 2, found in Oryza sativa subsp. japonica (Rice).